The sequence spans 130 residues: Methylglyoxal synthase (130 aa).

One can recognise an MGS-like domain in the interval 1 to 130 (MSKPRIALIA…DLARTMQDVC (130 aa)). Residues histidine 11, lysine 15, 37–40 (TGTT), and 57–58 (SG) contribute to the substrate site. Aspartate 63 acts as the Proton donor/acceptor in catalysis. Residue histidine 90 participates in substrate binding.

The protein belongs to the methylglyoxal synthase family.

The enzyme catalyses dihydroxyacetone phosphate = methylglyoxal + phosphate. Functionally, catalyzes the formation of methylglyoxal from dihydroxyacetone phosphate. The protein is Methylglyoxal synthase of Burkholderia multivorans (strain ATCC 17616 / 249).